Reading from the N-terminus, the 455-residue chain is L-serine dehydratase (455 aa).

This sequence belongs to the iron-sulfur dependent L-serine dehydratase family. [4Fe-4S] cluster is required as a cofactor.

It catalyses the reaction L-serine = pyruvate + NH4(+). Its pathway is carbohydrate biosynthesis; gluconeogenesis. This Streptomyces coelicolor (strain ATCC BAA-471 / A3(2) / M145) protein is L-serine dehydratase (sdaA).